The following is a 514-amino-acid chain: Putative GTP-binding protein 6 (514 aa).

The disordered stretch occupies residues 48 to 71 (WAGGGPVRGGGEEDPREDEEEEED). Residues 59-71 (EEDPREDEEEEED) are compositionally biased toward acidic residues. In terms of domain architecture, Hflx-type G spans 285–449 (PVVSVVGYTN…ALEASVLRAT (165 aa)). Mg(2+)-binding residues include threonine 298 and threonine 319.

It belongs to the TRAFAC class OBG-HflX-like GTPase superfamily. HflX GTPase family. Mg(2+) is required as a cofactor.

The sequence is that of Putative GTP-binding protein 6 (Gtpbp6) from Mus musculus (Mouse).